A 192-amino-acid chain; its full sequence is Ion-translocating oxidoreductase complex subunit B (192 aa).

The segment at 1–26 (MNTIWIAVGALTLLGLVFGAILGYAS) is hydrophobic. The 4Fe-4S domain maps to 32–91 (EDDPVVEKIDAILPQSQCGQCGYPGCRPYAEAVGLQGEKINRCAPGGEAVMLKMAELLNV). The [4Fe-4S] cluster site is built by Cys49, Cys52, Cys57, Cys74, Cys117, Cys120, Cys123, Cys127, Cys147, Cys150, Cys153, and Cys157. 4Fe-4S ferredoxin-type domains follow at residues 108–137 (MLAVIDENNCIGCTKCIQACPVDAIVGATR) and 138–167 (AMHTVMSDLCTGCNLCVDPCPTHCIELRPV).

It belongs to the 4Fe4S bacterial-type ferredoxin family. RnfB subfamily. In terms of assembly, the complex is composed of six subunits: RsxA, RsxB, RsxC, RsxD, RsxE and RsxG. Requires [4Fe-4S] cluster as cofactor.

The protein localises to the cell inner membrane. In terms of biological role, part of a membrane-bound complex that couples electron transfer with translocation of ions across the membrane. Required to maintain the reduced state of SoxR. In Salmonella agona (strain SL483), this protein is Ion-translocating oxidoreductase complex subunit B.